The primary structure comprises 283 residues: Non-selective voltage-gated ion channel VDAC3 (283 aa).

N-acetylcysteine is present on C2. T4 is subject to Phosphothreonine. 3 positions are modified to N6-acetyllysine: K12, K15, and K20. Transmembrane regions (beta stranded) follow at residues 26–35 (MVKIDLKTKS) and 39–47 (VEFSTSGHA). T33 carries the post-translational modification Phosphothreonine. K53 is covalently cross-linked (Glycyl lysine isopeptide (Lys-Gly) (interchain with G-Cter in ubiquitin)). 3 beta stranded membrane passes run 54–64 (ASGNLETKYKV), 69–76 (LIFTQKWN), and 80–89 (TLGTEISWEN). Position 90 is an N6-acetyllysine (K90). Residues 95-104 (LKLTVDTIFV) form a beta stranded membrane-spanning segment. Residues K109 and K110 each participate in a glycyl lysine isopeptide (Lys-Gly) (interchain with G-Cter in ubiquitin) cross-link. The next 10 beta stranded transmembrane spans lie at 111–120 (SGKLKASYRR), 123–130 (FSVGSKVD), 137–145 (TIYGWAVLA), 150–158 (LAGYQMSFD), 163–175 (KLCQNNFALGYKA), 178–185 (FQLHTHVN), 189–198 (EFGGSIYQRV), 202–211 (IETSINLAWT), 218–227 (RFGIAAKYRL), and 231–238 (TSLSAKVN). A Phosphoserine modification is found at S241. NAD(+) is bound by residues 242 to 244 (LIG) and 260 to 264 (SALVD). Beta stranded transmembrane passes span 242–251 (LIGLGYTQSL) and 254–263 (GVKLTLSALV). K266 is modified (N6-acetyllysine; alternate). K266 participates in a covalent cross-link: Glycyl lysine isopeptide (Lys-Gly) (interchain with G-Cter in ubiquitin); alternate. A beta stranded membrane pass occupies residues 273 to 282 (HKVGLGFELE).

This sequence belongs to the eukaryotic mitochondrial porin family. As to quaternary structure, interacts with ARMC12 in a TBC1D21-dependent manner. Interacts with MISFA. In terms of processing, ubiquitinated by PRKN during mitophagy, leading to its degradation and enhancement of mitophagy. Deubiquitinated by USP30. In terms of tissue distribution, isoform 1 is widely expressed with strong expression in atrium and ascitic tumor, lower levels in brain and very low levels in liver and kidney. Isoform 2 is also widely expressed with highest levels in brain but no expression in kidney. Also expressed in flagella of epididymal sperm.

The protein localises to the mitochondrion outer membrane. The protein resides in the membrane. The catalysed reaction is chloride(in) = chloride(out). The enzyme catalyses K(+)(in) = K(+)(out). Its function is as follows. Non-selective voltage-gated ion channel that mediates the transport of anions and cations through the mitochondrion outer membrane and plasma membrane. Forms a high-conducting channel with a stable open state and a voltage-induced closure with a mild preference for anions over cations. Involved in male fertility and sperm mitochondrial sheath formation. This is Non-selective voltage-gated ion channel VDAC3 from Rattus norvegicus (Rat).